Here is a 243-residue protein sequence, read N- to C-terminus: Terpene cyclase penB (243 aa).

The next 3 helical transmembrane spans lie at 19 to 39, 48 to 68, and 78 to 98; these read IANI…VGMI, YGMA…YSLI, and GVFI…IKFA. A glycan (N-linked (GlcNAc...) asparagine) is linked at asparagine 111. Helical transmembrane passes span 112-132, 137-157, 172-194, and 205-225; these read LSLI…ALAA, SLAY…GGLC, LWLS…WMYW, and LVLW…LCYW.

The protein belongs to the paxB family.

The protein localises to the membrane. It functions in the pathway secondary metabolite biosynthesis. Functionally, terpene cyclase; part of the gene cluster that mediates the biosynthesis of the indole diterpenes penitrems. The geranylgeranyl diphosphate (GGPP) synthase penG catalyzes the first step in penitrem biosynthesis via conversion of farnesyl pyrophosphate and isopentyl pyrophosphate into geranylgeranyl pyrophosphate (GGPP). Condensation of indole-3-glycerol phosphate with GGPP by the prenyl transferase penC then forms 3-geranylgeranylindole (3-GGI). Epoxidation by the FAD-dependent monooxygenase penM leads to a epoxidized-GGI that is substrate of the terpene cyclase penB for cyclization to yield paspaline. Paspaline is subsequently converted to 13-desoxypaxilline by the cytochrome P450 monooxygenase penP, the latter being then converted to paxilline by the cytochrome P450 monooxygenase penQ. Paxilline is converted to beta-paxitriol via C-10 ketoreduction by the short-chain dehydrogenase PC-15 which can be monoprenylated at the C-20 by the indole diterpene prenyltransferase penD. A two-step elimination (acetylation and elimination) process performed by the O-acetyltransferase PC-16 and the P.simplicissimum ptmI-ortholog not yet identified in P.crustosum, leads to the production of the prenylated form of penijanthine. The FAD-linked oxidoreductase ptmO then converts the prenylated form of penijanthine into PC-M5 which is in turn transformed into PC-M4 by the aromatic dimethylallyltransferase PC-22. A series of oxidation steps involving 4 cytochrome P450 monooxygenases (PC-21, PC-05, PC-23, PC-20) and a FAD-dependent monooxygenase (PC-14) are required for the transformation of PC-M4 to penitrems A and E. Synthesis of these final products is proposed to proceed via penitrems D and C (PC-21, PC-05, PC-14) and penitrems B and F (PC-21, PC-05, PC-14, PC-23). This chain is Terpene cyclase penB (penB), found in Penicillium crustosum (Blue mold fungus).